A 375-amino-acid polypeptide reads, in one-letter code: Chaperone protein DnaJ (375 aa).

Positions 5-70 (DYYEVLGVAR…NKRRAYDAHG (66 aa)) constitute a J domain. The segment at 131–208 (GIERRIEIPT…CHGAGRVEED (78 aa)) adopts a CR-type zinc-finger fold. Residues C144, C147, C160, C163, C182, C185, C196, and C199 each contribute to the Zn(2+) site. 4 CXXCXGXG motif repeats span residues 144–151 (CAPCHGSG), 160–167 (CGTCHGRG), 182–189 (CPHCDGRG), and 196–203 (CKTCHGAG).

It belongs to the DnaJ family. Homodimer. Zn(2+) is required as a cofactor.

It is found in the cytoplasm. Participates actively in the response to hyperosmotic and heat shock by preventing the aggregation of stress-denatured proteins and by disaggregating proteins, also in an autonomous, DnaK-independent fashion. Unfolded proteins bind initially to DnaJ; upon interaction with the DnaJ-bound protein, DnaK hydrolyzes its bound ATP, resulting in the formation of a stable complex. GrpE releases ADP from DnaK; ATP binding to DnaK triggers the release of the substrate protein, thus completing the reaction cycle. Several rounds of ATP-dependent interactions between DnaJ, DnaK and GrpE are required for fully efficient folding. Also involved, together with DnaK and GrpE, in the DNA replication of plasmids through activation of initiation proteins. This is Chaperone protein DnaJ from Xanthomonas euvesicatoria pv. vesicatoria (strain 85-10) (Xanthomonas campestris pv. vesicatoria).